The following is a 266-amino-acid chain: Hydroxymethylpyrimidine/phosphomethylpyrimidine kinase (266 aa).

Gln-43 is a 4-amino-5-hydroxymethyl-2-methylpyrimidine binding site.

It belongs to the ThiD family.

The enzyme catalyses 4-amino-5-hydroxymethyl-2-methylpyrimidine + ATP = 4-amino-2-methyl-5-(phosphooxymethyl)pyrimidine + ADP + H(+). It catalyses the reaction 4-amino-2-methyl-5-(phosphooxymethyl)pyrimidine + ATP = 4-amino-2-methyl-5-(diphosphooxymethyl)pyrimidine + ADP. The protein operates within cofactor biosynthesis; thiamine diphosphate biosynthesis; 4-amino-2-methyl-5-diphosphomethylpyrimidine from 5-amino-1-(5-phospho-D-ribosyl)imidazole: step 2/3. It functions in the pathway cofactor biosynthesis; thiamine diphosphate biosynthesis; 4-amino-2-methyl-5-diphosphomethylpyrimidine from 5-amino-1-(5-phospho-D-ribosyl)imidazole: step 3/3. Its function is as follows. Catalyzes the phosphorylation of hydroxymethylpyrimidine phosphate (HMP-P) to HMP-PP, and of HMP to HMP-P. This Rhizobium meliloti (strain 1021) (Ensifer meliloti) protein is Hydroxymethylpyrimidine/phosphomethylpyrimidine kinase (thiD).